Here is a 232-residue protein sequence, read N- to C-terminus: Chaperone protein CssC (232 aa).

An N-terminal signal peptide occupies residues 1–20 (MKSKLIILLTLVPFSSFSTG).

This sequence belongs to the periplasmic pilus chaperone family.

It is found in the periplasm. In terms of biological role, involved in the biogenesis of the CS6 fimbria. The protein is Chaperone protein CssC (cssC) of Escherichia coli.